An 883-amino-acid polypeptide reads, in one-letter code: Alanine--tRNA ligase (883 aa).

Zn(2+) is bound by residues H562, H566, C675, and H679.

The protein belongs to the class-II aminoacyl-tRNA synthetase family. The cofactor is Zn(2+).

Its subcellular location is the cytoplasm. It catalyses the reaction tRNA(Ala) + L-alanine + ATP = L-alanyl-tRNA(Ala) + AMP + diphosphate. In terms of biological role, catalyzes the attachment of alanine to tRNA(Ala) in a two-step reaction: alanine is first activated by ATP to form Ala-AMP and then transferred to the acceptor end of tRNA(Ala). Also edits incorrectly charged Ser-tRNA(Ala) and Gly-tRNA(Ala) via its editing domain. In Ruegeria sp. (strain TM1040) (Silicibacter sp.), this protein is Alanine--tRNA ligase.